A 219-amino-acid polypeptide reads, in one-letter code: Thiamine-phosphate synthase (219 aa).

4-amino-2-methyl-5-(diphosphooxymethyl)pyrimidine-binding positions include Q48–K52 and N84. Residues D85 and D104 each coordinate Mg(2+). S123 provides a ligand contact to 4-amino-2-methyl-5-(diphosphooxymethyl)pyrimidine. A 2-[(2R,5Z)-2-carboxy-4-methylthiazol-5(2H)-ylidene]ethyl phosphate-binding site is contributed by T150–S152. K153 provides a ligand contact to 4-amino-2-methyl-5-(diphosphooxymethyl)pyrimidine. 2-[(2R,5Z)-2-carboxy-4-methylthiazol-5(2H)-ylidene]ethyl phosphate is bound by residues G181 and I199–S200.

This sequence belongs to the thiamine-phosphate synthase family. The cofactor is Mg(2+).

The catalysed reaction is 2-[(2R,5Z)-2-carboxy-4-methylthiazol-5(2H)-ylidene]ethyl phosphate + 4-amino-2-methyl-5-(diphosphooxymethyl)pyrimidine + 2 H(+) = thiamine phosphate + CO2 + diphosphate. It carries out the reaction 2-(2-carboxy-4-methylthiazol-5-yl)ethyl phosphate + 4-amino-2-methyl-5-(diphosphooxymethyl)pyrimidine + 2 H(+) = thiamine phosphate + CO2 + diphosphate. The enzyme catalyses 4-methyl-5-(2-phosphooxyethyl)-thiazole + 4-amino-2-methyl-5-(diphosphooxymethyl)pyrimidine + H(+) = thiamine phosphate + diphosphate. It participates in cofactor biosynthesis; thiamine diphosphate biosynthesis; thiamine phosphate from 4-amino-2-methyl-5-diphosphomethylpyrimidine and 4-methyl-5-(2-phosphoethyl)-thiazole: step 1/1. Condenses 4-methyl-5-(beta-hydroxyethyl)thiazole monophosphate (THZ-P) and 2-methyl-4-amino-5-hydroxymethyl pyrimidine pyrophosphate (HMP-PP) to form thiamine monophosphate (TMP). The chain is Thiamine-phosphate synthase from Helicobacter pylori (strain Shi470).